We begin with the raw amino-acid sequence, 1404 residues long: DNA-directed RNA polymerase subunit beta' (1404 aa).

Cys60, Cys62, Cys75, and Cys78 together coordinate Zn(2+). Residues Asp449, Asp451, and Asp453 each contribute to the Mg(2+) site. Cys778, Cys852, Cys859, and Cys862 together coordinate Zn(2+). The disordered stretch occupies residues Asp1381–Glu1404. Positions Leu1384–Glu1404 are enriched in acidic residues.

Belongs to the RNA polymerase beta' chain family. In terms of assembly, the RNAP catalytic core consists of 2 alpha, 1 beta, 1 beta' and 1 omega subunit. When a sigma factor is associated with the core the holoenzyme is formed, which can initiate transcription. Mg(2+) serves as cofactor. Requires Zn(2+) as cofactor.

The catalysed reaction is RNA(n) + a ribonucleoside 5'-triphosphate = RNA(n+1) + diphosphate. Functionally, DNA-dependent RNA polymerase catalyzes the transcription of DNA into RNA using the four ribonucleoside triphosphates as substrates. The chain is DNA-directed RNA polymerase subunit beta' from Leptospira borgpetersenii serovar Hardjo-bovis (strain JB197).